Here is a 371-residue protein sequence, read N- to C-terminus: tRNA-specific 2-thiouridylase MnmA (371 aa).

ATP contacts are provided by residues 13–20 and Met-39; that span reads GMSGGVDS. Positions 99–101 are interaction with target base in tRNA; the sequence is NPD. Cys-104 serves as the catalytic Nucleophile. Cysteines 104 and 200 form a disulfide. Gly-128 serves as a coordination point for ATP. An interaction with tRNA region spans residues 150-152; that stretch reads KDQ. Cys-200 (cysteine persulfide intermediate) is an active-site residue. Positions 308–309 are interaction with tRNA; that stretch reads RY.

Belongs to the MnmA/TRMU family.

The protein localises to the cytoplasm. It catalyses the reaction S-sulfanyl-L-cysteinyl-[protein] + uridine(34) in tRNA + AH2 + ATP = 2-thiouridine(34) in tRNA + L-cysteinyl-[protein] + A + AMP + diphosphate + H(+). Catalyzes the 2-thiolation of uridine at the wobble position (U34) of tRNA, leading to the formation of s(2)U34. This Listeria innocua serovar 6a (strain ATCC BAA-680 / CLIP 11262) protein is tRNA-specific 2-thiouridylase MnmA.